The primary structure comprises 482 residues: Glutamyl-tRNA(Gln) amidotransferase subunit A (482 aa).

Catalysis depends on charge relay system residues Lys-74 and Ser-149. Ser-173 (acyl-ester intermediate) is an active-site residue.

This sequence belongs to the amidase family. GatA subfamily. In terms of assembly, heterotrimer of A, B and C subunits.

The enzyme catalyses L-glutamyl-tRNA(Gln) + L-glutamine + ATP + H2O = L-glutaminyl-tRNA(Gln) + L-glutamate + ADP + phosphate + H(+). Its function is as follows. Allows the formation of correctly charged Gln-tRNA(Gln) through the transamidation of misacylated Glu-tRNA(Gln) in organisms which lack glutaminyl-tRNA synthetase. The reaction takes place in the presence of glutamine and ATP through an activated gamma-phospho-Glu-tRNA(Gln). The protein is Glutamyl-tRNA(Gln) amidotransferase subunit A of Prochlorococcus marinus (strain AS9601).